A 93-amino-acid polypeptide reads, in one-letter code: Co-chaperonin GroES (93 aa).

It belongs to the GroES chaperonin family. Heptamer of 7 subunits arranged in a ring. Interacts with the chaperonin GroEL.

It localises to the cytoplasm. In terms of biological role, together with the chaperonin GroEL, plays an essential role in assisting protein folding. The GroEL-GroES system forms a nano-cage that allows encapsulation of the non-native substrate proteins and provides a physical environment optimized to promote and accelerate protein folding. GroES binds to the apical surface of the GroEL ring, thereby capping the opening of the GroEL channel. The polypeptide is Co-chaperonin GroES (Streptococcus sanguinis).